The following is a 419-amino-acid chain: UDP-N-acetylglucosamine 1-carboxyvinyltransferase 2 (419 aa).

A phosphoenolpyruvate-binding site is contributed by 22 to 23; sequence KN. Arginine 92 serves as a coordination point for UDP-N-acetyl-alpha-D-glucosamine. The Proton donor role is filled by cysteine 116. Cysteine 116 is modified (2-(S-cysteinyl)pyruvic acid O-phosphothioketal). Residues 121 to 125, aspartate 306, and isoleucine 328 each bind UDP-N-acetyl-alpha-D-glucosamine; that span reads RPIDL.

This sequence belongs to the EPSP synthase family. MurA subfamily.

It is found in the cytoplasm. It carries out the reaction phosphoenolpyruvate + UDP-N-acetyl-alpha-D-glucosamine = UDP-N-acetyl-3-O-(1-carboxyvinyl)-alpha-D-glucosamine + phosphate. The protein operates within cell wall biogenesis; peptidoglycan biosynthesis. Its function is as follows. Cell wall formation. Adds enolpyruvyl to UDP-N-acetylglucosamine. The polypeptide is UDP-N-acetylglucosamine 1-carboxyvinyltransferase 2 (Streptococcus pyogenes serotype M3 (strain ATCC BAA-595 / MGAS315)).